Reading from the N-terminus, the 780-residue chain is MTNSEPRRMTCDSEVVWKKLQDGLDVAYRRENMAPKDYMTLYTSVYDYCTSITLSTSRRDGEDGRAESSTPARTAGADFVGHEMYQRVEEYVKAYVIAVCEKGAELSGEDLLKYYTTEWENFRISSKVMDGIFAYLNRHWIRRELDEGHENIYMVYTLALVVWKRNLFNDLKDKVIDAMLELIRSERTGSMINSRYISGVVECLVELGVDDSETDAKKDAETKKLAVYKEFFEVKFLEATRGFYTQEAANFLSNGGNVTDYMIKVETRLNQEDDRCQLYLNSSTKTPLATCCESVLISNQLDFLQRHFGGLLVDKRDDDLSRMFKLCDRVPNGLDELRKSLENHIAKEGHQALERVAMEAATDAKLYVKTLLEVHERYQSLVNRSFKNEPGFMQSLDKAATSFINNNAVTKRAPPQAQLTKSAELLARYCDQLLRKSSKMPDEAELEELQTKIMVVFKYIDDKDVFSKFYTKMFSKRLISELSASDEAEANFITKLKSMCGYEYTARLSKMVNDTQVSKDLTADFKEKKADMLGQKSVEFNVLVLSSGSWPTFPTTPITLPQQLSKTIEIFGQFYNEKFNGRRLTWVYSQSRGEITSTAFPKKYVFTATTAQMCTMLLFNEQDSYTVEQIAAATKMDEKSAPAIVGSLIKNLVLKADTELQKEDEVPMTATVSLNKAYMNKKVRVDLSKFTMKQDAVRDTENVQKNVEEDRKSVISACIVRIMKTRKRVQHQQLMTEVITQLSGRFKPKVEMIKRCIGSLIEKEYMLRTEGQKDLYEYLA.

In terms of domain architecture, Cullin neddylation spans 710 to 771 (DRKSVISACI…EKEYMLRTEG (62 aa)). Lys-724 is covalently cross-linked (Glycyl lysine isopeptide (Lys-Gly) (interchain with G-Cter in NEDD8)).

Belongs to the cullin family. Component of an SCF (SKP1-CUL1-F-box protein) E3 ubiquitin ligase complex composed of cul-1, fsn-1, rpm-1 and skr-1. Interacts with Skp1-related proteins skr-1, skr-2, skr-3, skr-4, skr-7, skr-8, skr-9 and skr-10. In terms of processing, neddylated; which enhances the ubiquitination activity of SCF. Ubiquitous.

The protein resides in the cytoplasm. The protein operates within protein modification; protein ubiquitination. In terms of biological role, probable core component of multiple cullin-RING-based SCF (SKP1-CUL1-F-box) E3 ubiquitin-protein ligase complexes which mediate the ubiquitination and subsequent proteasomal degradation of target proteins. As a scaffold protein may contribute to catalysis through positioning of the substrate and the ubiquitin-conjugating enzyme. Required for developmentally programmed transitions from the G1 phase of the cell cycle to the G0 phase or the apoptotic pathway. The chain is Cullin-1 (cul-1) from Caenorhabditis elegans.